We begin with the raw amino-acid sequence, 313 residues long: Ornithine carbamoyltransferase (313 aa).

Carbamoyl phosphate is bound by residues 57 to 60, Gln-84, Arg-108, and 135 to 138; these read STRT and HPTQ. Residues Asn-167, Asp-231, and 235–236 each bind L-ornithine; that span reads SM. Carbamoyl phosphate-binding positions include 272-273 and Arg-300; that span reads CL.

This sequence belongs to the aspartate/ornithine carbamoyltransferase superfamily. OTCase family.

It is found in the cytoplasm. It carries out the reaction carbamoyl phosphate + L-ornithine = L-citrulline + phosphate + H(+). Its pathway is amino-acid biosynthesis; L-arginine biosynthesis; L-arginine from L-ornithine and carbamoyl phosphate: step 1/3. Reversibly catalyzes the transfer of the carbamoyl group from carbamoyl phosphate (CP) to the N(epsilon) atom of ornithine (ORN) to produce L-citrulline. In Pseudothermotoga lettingae (strain ATCC BAA-301 / DSM 14385 / NBRC 107922 / TMO) (Thermotoga lettingae), this protein is Ornithine carbamoyltransferase.